We begin with the raw amino-acid sequence, 347 residues long: MNPFVSVIIYTTIILGTMIVMTSSHWLLTWTGFEMNMLAIIPIMMKSPNPRATEASVKYFMTQATASMLLMLAVIINLLYSGQWTVMKMLNPTASMIMTMALAMKLGLSPFHFWVPEVTQGVPLTAGLILLTWQKLAPLSILYQISPSINPNLILTMSMLSILVGGWGGLNQTQLRKIMAYSSIAHMGWMAAILIYNPTMTILNLTIYLMTTFTMFTMFALNSTTTTLSLSHTWNKTPIITTLMLTILLSMGGLPPLTGFVPKWMIIQEMTKNDSIILPTLMAIMALLNLYFYMRLTYSTTLTMFPSSNNMKMKWQFEASKHKTLLPTMIILSTMLLPLTPMLVVLD.

9 helical membrane-spanning segments follow: residues 1 to 21 (MNPF…MIVM), 59 to 79 (YFMT…INLL), 93 to 115 (TASM…HFWV), 149 to 169 (INPN…GWGG), 178 to 198 (IMAY…IYNP), 201 to 221 (TILN…MFAL), 239 to 259 (IITT…PLTG), 274 to 294 (DSII…YFYM), and 325 to 345 (LLPT…MLVV).

The protein belongs to the complex I subunit 2 family. In terms of assembly, core subunit of respiratory chain NADH dehydrogenase (Complex I) which is composed of 45 different subunits. Interacts with TMEM242.

The protein resides in the mitochondrion inner membrane. It carries out the reaction a ubiquinone + NADH + 5 H(+)(in) = a ubiquinol + NAD(+) + 4 H(+)(out). In terms of biological role, core subunit of the mitochondrial membrane respiratory chain NADH dehydrogenase (Complex I) which catalyzes electron transfer from NADH through the respiratory chain, using ubiquinone as an electron acceptor. Essential for the catalytic activity and assembly of complex I. In Hippopotamus amphibius (Hippopotamus), this protein is NADH-ubiquinone oxidoreductase chain 2.